The sequence spans 301 residues: Ornithine carbamoyltransferase (301 aa).

Carbamoyl phosphate-binding positions include Arg100 and His127–Gln130. L-ornithine is bound by residues Asn158, Asp221, and Ser225–Met226. Carbamoyl phosphate is bound by residues Cys260–Leu261 and Arg288.

Belongs to the aspartate/ornithine carbamoyltransferase superfamily. OTCase family.

The protein localises to the cytoplasm. It carries out the reaction carbamoyl phosphate + L-ornithine = L-citrulline + phosphate + H(+). It participates in amino-acid biosynthesis; L-arginine biosynthesis; L-arginine from L-ornithine and carbamoyl phosphate: step 1/3. In terms of biological role, reversibly catalyzes the transfer of the carbamoyl group from carbamoyl phosphate (CP) to the N(epsilon) atom of ornithine (ORN) to produce L-citrulline. This Shewanella oneidensis (strain ATCC 700550 / JCM 31522 / CIP 106686 / LMG 19005 / NCIMB 14063 / MR-1) protein is Ornithine carbamoyltransferase.